We begin with the raw amino-acid sequence, 477 residues long: Glycogen synthase (477 aa).

An ADP-alpha-D-glucose-binding site is contributed by K15.

This sequence belongs to the glycosyltransferase 1 family. Bacterial/plant glycogen synthase subfamily.

It catalyses the reaction [(1-&gt;4)-alpha-D-glucosyl](n) + ADP-alpha-D-glucose = [(1-&gt;4)-alpha-D-glucosyl](n+1) + ADP + H(+). It participates in glycan biosynthesis; glycogen biosynthesis. Functionally, synthesizes alpha-1,4-glucan chains using ADP-glucose. In Shigella boydii serotype 4 (strain Sb227), this protein is Glycogen synthase.